The primary structure comprises 87 residues: Small ribosomal subunit protein uS17 (87 aa).

It belongs to the universal ribosomal protein uS17 family. In terms of assembly, part of the 30S ribosomal subunit.

Its function is as follows. One of the primary rRNA binding proteins, it binds specifically to the 5'-end of 16S ribosomal RNA. The chain is Small ribosomal subunit protein uS17 from Macrococcus caseolyticus (strain JCSC5402) (Macrococcoides caseolyticum).